Consider the following 1062-residue polypeptide: Probable sucrose-phosphate synthase 3 (1062 aa).

Residues 113 to 122 show a composition bias toward basic and acidic residues; the sequence is EREQGRRDAT. The interval 113–141 is disordered; it reads EREQGRRDATEDLSEDLSEGEKGDGLGEI. Phosphoserine is present on residues S126, S130, and S156. The interval 715–735 is disordered; sequence MDGDKPSLNGSLEPNSADPVK.

This sequence belongs to the glycosyltransferase 1 family. As to quaternary structure, homodimer or homotetramer.

The catalysed reaction is beta-D-fructose 6-phosphate + UDP-alpha-D-glucose = sucrose 6(F)-phosphate + UDP + H(+). Its pathway is glycan biosynthesis; sucrose biosynthesis; sucrose from D-fructose 6-phosphate and UDP-alpha-D-glucose: step 1/2. Activity is regulated by phosphorylation and moderated by concentration of metabolites and light. In terms of biological role, plays a role in photosynthetic sucrose synthesis by catalyzing the rate-limiting step of sucrose biosynthesis from UDP-glucose and fructose- 6-phosphate. Involved in the regulation of carbon partitioning in the leaves of plants. May regulate the synthesis of sucrose and therefore play a major role as a limiting factor in the export of photoassimilates out of the leaf. Plays a role for sucrose availability that is essential for plant growth and fiber elongation. The protein is Probable sucrose-phosphate synthase 3 (SPS3) of Arabidopsis thaliana (Mouse-ear cress).